We begin with the raw amino-acid sequence, 918 residues long: Cap-specific mRNA (nucleoside-2'-O-)-methyltransferase 1 (918 aa).

The span at 1-18 shows a compositional bias: basic and acidic residues; sequence MADRKSDEGEDEYQHKEQ. Disordered regions lie at residues 1–56 and 62–81; these read MADR…EERA and KRGYQAGDDEEDDFTAEEEP. The span at 19–30 shows a compositional bias: polar residues; sequence MVTNRTSSFQPK. A compositionally biased stretch (basic and acidic residues) spans 43-56; it reads RAADRREEFMEERA. Acidic residues predominate over residues 68-80; it reads GDDEEDDFTAEEE. In terms of domain architecture, G-patch spans 86 to 132; it reads PLTVAERLMAAMGHKAGEGLGKHGQGISEPIASSTQRGRTGLGHNAG. A RrmJ-type SAM-dependent 2'-O-MTase domain is found at 236–465; that stretch reads FFQNRAAMKT…ERYITCKGLR (230 aa). S-adenosyl-L-methionine is bound by residues G298 and D379. Residue K419 is the Proton acceptor of the active site.

It carries out the reaction a 5'-end (N(7)-methyl 5'-triphosphoguanosine)-ribonucleoside in mRNA + S-adenosyl-L-methionine = a 5'-end (N(7)-methyl 5'-triphosphoguanosine)-(2'-O-methyl-ribonucleoside) in mRNA + S-adenosyl-L-homocysteine + H(+). Functionally, S-adenosyl-L-methionine-dependent methyltransferase that mediates mRNA cap1 2'-O-ribose methylation to the 5'-cap structure of mRNAs. Methylates the ribose of the first nucleotide of a m(7)GpppG-capped mRNA to produce m(7)GpppNmp (cap1). Cap1 modification is linked to higher levels of translation. This Caenorhabditis elegans protein is Cap-specific mRNA (nucleoside-2'-O-)-methyltransferase 1.